The following is a 1107-amino-acid chain: Phospholipid-transporting ATPase 2 (1107 aa).

Over 1–33 (MKRFVYINDDEASKELCCDNRISNRKYTLWNFL) the chain is Cytoplasmic. Residues 34–55 (PKNLWEQFSRFMNQYFLLIACL) form a helical membrane-spanning segment. Over 56 to 60 (QLWSL) the chain is Extracellular. Residues 61–83 (ITPVNPASTWGPLIFIFAVSASK) form a helical membrane-spanning segment. Residues 84–268 (EAWDDYHRYL…TAMDAMIDKL (185 aa)) are Cytoplasmic-facing. Residues 269-290 (TGAIFVFQIVVVLVLGIAGNVW) traverse the membrane as a helical segment. The Extracellular portion of the chain corresponds to 291–315 (KDTEARKQWYVQYPEEAPWYELLVI). A helical membrane pass occupies residues 316–333 (PLRFELLCSIMIPISIKV). At 334 to 807 (SLDLVKGLYA…HGRYSYNRTA (474 aa)) the chain is on the cytoplasmic side. The active-site 4-aspartylphosphate intermediate is aspartate 381. Mg(2+) is bound by residues aspartate 752 and aspartate 756. Residues 808 to 827 (FLSQYSFYKSLLICFIQIFF) traverse the membrane as a helical segment. Over 828 to 841 (SFISGVSGTSLFNS) the chain is Extracellular. Residues 842–860 (VSLMAYNVFYTSVPVLVSV) traverse the membrane as a helical segment. Residues 861-890 (IDKDLSEASVMQHPQILFYCQAGRLLNPST) are Cytoplasmic-facing. A helical membrane pass occupies residues 891 to 912 (FAGWFGRSLFHAIIVFVITIHA). Residues 913-919 (YAYEKSE) lie on the Extracellular side of the membrane. Residues 920-942 (MEELGMVALSGCIWLQAFVVAQE) form a helical membrane-spanning segment. Residues 943 to 948 (TNSFTV) are Cytoplasmic-facing. A helical membrane pass occupies residues 949 to 969 (LQHLSIWGNLVGFYAINFLFS). Over 970–982 (AIPSSGMYTIMFR) the chain is Extracellular. The chain crosses the membrane as a helical span at residues 983 to 1007 (LCSQPSYWITMFLIVGAGMGPIFAL). Residues 1008–1107 (KYFRYTYRPS…SGYTRNCKDN (100 aa)) lie on the Cytoplasmic side of the membrane. The interval 1048-1075 (DLSPISITQPKNRSPVYEPLLSDSPNAT) is disordered. Serine 1050 is subject to Phosphoserine.

It belongs to the cation transport ATPase (P-type) (TC 3.A.3) family. Type IV subfamily. In terms of assembly, interacts with ALIS1, ALIS3 and ALIS5 in a heterologous system.

Its subcellular location is the endoplasmic reticulum membrane. It localises to the prevacuolar compartment membrane. It catalyses the reaction ATP + H2O + phospholipidSide 1 = ADP + phosphate + phospholipidSide 2.. Functionally, involved in transport of phospholipids. Contributes to transmembrane flipping of lipids. Requires an interaction with a protein of the ALIS family for activity. Specific for phosphatidylserine and has no activity with lysolipid, phosphatidylcholine or phosphatidylethanolamine. The chain is Phospholipid-transporting ATPase 2 from Arabidopsis thaliana (Mouse-ear cress).